The primary structure comprises 365 residues: Zinc finger TRAF-type-containing protein 1-A (365 aa).

The segment at Met1–Glu56 is disordered. The RING-type; degenerate zinc-finger motif lies at Cys72–Arg117. Residues Cys113–Thr186 form a TRAF-type zinc finger.

The protein belongs to the ZFTRAF1 family.

Its subcellular location is the cytoplasm. This is Zinc finger TRAF-type-containing protein 1-A from Xenopus laevis (African clawed frog).